The following is a 26-amino-acid chain: LTCLTKMVECIQLPLDVEDSSDTLCC.

Contains 2 disulfide bonds. In terms of tissue distribution, expressed by the venom duct.

Its subcellular location is the secreted. Functionally, acts as a neurotoxin by inhibiting an ion channel. This chain is Turripeptide OL57, found in Iotyrris olangoensis (Sea snail).